The primary structure comprises 431 residues: Histidinol dehydrogenase 1 (431 aa).

3 residues coordinate NAD(+): Tyr-127, Gln-188, and Asn-211. 3 residues coordinate substrate: Ser-234, Gln-256, and His-259. Zn(2+) contacts are provided by Gln-256 and His-259. Residues Glu-324 and His-325 each act as proton acceptor in the active site. Substrate contacts are provided by His-325, Asp-358, Glu-412, and His-417. Asp-358 lines the Zn(2+) pocket. Zn(2+) is bound at residue His-417.

The protein belongs to the histidinol dehydrogenase family. Zn(2+) serves as cofactor.

It carries out the reaction L-histidinol + 2 NAD(+) + H2O = L-histidine + 2 NADH + 3 H(+). It functions in the pathway amino-acid biosynthesis; L-histidine biosynthesis; L-histidine from 5-phospho-alpha-D-ribose 1-diphosphate: step 9/9. Functionally, catalyzes the sequential NAD-dependent oxidations of L-histidinol to L-histidinaldehyde and then to L-histidine. The sequence is that of Histidinol dehydrogenase 1 from Trichormus variabilis (strain ATCC 29413 / PCC 7937) (Anabaena variabilis).